The primary structure comprises 89 residues: Phosphocarrier protein HPr (89 aa).

Residues 1 to 88 (MLKQSIEIIN…DLINGYFGEG (88 aa)) form the HPr domain. Histidine 15 functions as the Pros-phosphohistidine intermediate in the catalytic mechanism. Phosphoserine; by HPrK/P is present on serine 46.

It belongs to the HPr family.

The protein localises to the cytoplasm. With respect to regulation, phosphorylation on Ser-46 inhibits the phosphoryl transfer from enzyme I to HPr. General (non sugar-specific) component of the phosphoenolpyruvate-dependent sugar phosphotransferase system (sugar PTS). This major carbohydrate active-transport system catalyzes the phosphorylation of incoming sugar substrates concomitantly with their translocation across the cell membrane. The phosphoryl group from phosphoenolpyruvate (PEP) is transferred to the phosphoryl carrier protein HPr by enzyme I. Phospho-HPr then transfers it to the PTS EIIA domain. This chain is Phosphocarrier protein HPr (ptsH), found in Neisseria meningitidis serogroup A / serotype 4A (strain DSM 15465 / Z2491).